The chain runs to 317 residues: Multivesicular body subunit 12B (317 aa).

A disordered region spans residues 1–49 (MRSCFCVRRSRDPPPPQPPPPQRGTDQATMPEVKELSEALPETPMDPIT). Over residues 13–22 (PPPPQPPPPQ) the composition is skewed to pro residues. Positions 45 to 191 (MDPITGVGVV…SMGIWYRMGR (147 aa)) constitute an MABP domain. Position 99 is a phosphoserine (S99). 3 positions are modified to phosphothreonine: T120, T202, and T203. Residues 193 to 218 (PRNHDSSQPTTPSQSSASSTPAPNLP) form a disordered region. A compositionally biased stretch (low complexity) spans 198–214 (SSQPTTPSQSSASSTPA). S222 carries the post-translational modification Phosphoserine. A UMA domain is found at 252-301 (MDGVPFMISEKFSCIPESMQPFDLLGITIKSLAEIEKEYEYSFRTEQSAA). The tract at residues 297-317 (EQSAAARLPPSPTRCQQIPQS) is disordered. S307 carries the phosphoserine modification.

This sequence belongs to the MVB12 family. In terms of assembly, component of the ESCRT-I complex (endosomal sorting complex required for transport I) which consists of TSG101, VPS28, a VPS37 protein (VPS37A to -D) and MVB12A or MVB12B in a 1:1:1:1 stoichiometry. Interacts with TSG101; the association appears to be mediated by the TSG101-VPS37 binary subcomplex. Interacts with VPS28. Interacts with VPS37B; the association appears to be mediated by the TSG101-VPS37 binary subcomplex. Interacts with VPS37C; the association appears to be mediated by the TSG101-VPS37 binary subcomplex.

It localises to the endosome. It is found in the late endosome membrane. In terms of biological role, component of the ESCRT-I complex, a regulator of vesicular trafficking process. Required for the sorting of endocytic ubiquitinated cargos into multivesicular bodies. The protein is Multivesicular body subunit 12B (Mvb12b) of Mus musculus (Mouse).